The primary structure comprises 180 residues: Large ribosomal subunit protein uL5 (180 aa).

This sequence belongs to the universal ribosomal protein uL5 family. In terms of assembly, part of the 50S ribosomal subunit; part of the 5S rRNA/L5/L18/L25 subcomplex. Contacts the 5S rRNA and the P site tRNA. Forms a bridge to the 30S subunit in the 70S ribosome.

Functionally, this is one of the proteins that bind and probably mediate the attachment of the 5S RNA into the large ribosomal subunit, where it forms part of the central protuberance. In the 70S ribosome it contacts protein S13 of the 30S subunit (bridge B1b), connecting the 2 subunits; this bridge is implicated in subunit movement. Contacts the P site tRNA; the 5S rRNA and some of its associated proteins might help stabilize positioning of ribosome-bound tRNAs. The sequence is that of Large ribosomal subunit protein uL5 from Polynucleobacter asymbioticus (strain DSM 18221 / CIP 109841 / QLW-P1DMWA-1) (Polynucleobacter necessarius subsp. asymbioticus).